A 92-amino-acid chain; its full sequence is MAPTEKKRTTRKKKDPDAPKRSLSAYMFFANENRDIVRAENPGISFGQVGKLLGEKWKALTPEDKIPYENKADTDKKRYEKEKAEYAKKNAA.

2 disordered regions span residues 1-21 (MAPTEKKRTTRKKKDPDAPKR) and 63-92 (EDKIPYENKADTDKKRYEKEKAEYAKKNAA). The HMG box DNA-binding region spans 19-87 (PKRSLSAYMF…RYEKEKAEYA (69 aa)).

This sequence belongs to the NHP6 family. In terms of assembly, weakly associates with the stable SPT16-POB3 heterodimer to form the FACT complex.

It is found in the nucleus. It localises to the chromosome. Functionally, DNA-binding protein that induces severe bending of DNA. Required for DNA-binding by the FACT complex, a general chromatin factor that acts to reorganize nucleosomes. The FACT complex is involved in multiple processes that require DNA as a template such as mRNA elongation, DNA replication and DNA repair. Also augments the fidelity of transcription by RNA polymerase III independently of any role in the FACT complex. The polypeptide is Non-histone chromosomal protein 6 (NHP6) (Debaryomyces hansenii (strain ATCC 36239 / CBS 767 / BCRC 21394 / JCM 1990 / NBRC 0083 / IGC 2968) (Yeast)).